The sequence spans 126 residues: Adrenocorticotropic hormone receptor (126 aa).

Residues 1 to 25 (VLPEEIFFTISIVGVLENLIVLLAV) form a helical membrane-spanning segment. Residues 26–34 (FKNKNLQAP) lie on the Cytoplasmic side of the membrane. Residues 35–55 (MYFFICSLAISDMLGSLYKIL) form a helical membrane-spanning segment. The Extracellular portion of the chain corresponds to 56 to 80 (ENILIILRNMGYLKPRGSFETTADD). The chain crosses the membrane as a helical span at residues 81–102 (IIDSLFVLSLLGAIFSLSVIAA). At 103–123 (DRYITIFHALRYHSIVTMRRT) the chain is on the cytoplasmic side. The chain crosses the membrane as a helical span at residues 124-126 (VVV).

The protein belongs to the G-protein coupled receptor 1 family. In terms of assembly, interacts with MRAP; increasing ligand-sensitivity and generation of cAMP. Interacts with MRAP2; competing with MRAP for binding to MC2R and impairing the binding of corticotropin (ACTH).

The protein resides in the cell membrane. In terms of biological role, receptor for corticotropin (ACTH). This receptor is mediated by G proteins (G(s)) which activate adenylate cyclase (cAMP). The sequence is that of Adrenocorticotropic hormone receptor (MC2R) from Papio hamadryas (Hamadryas baboon).